We begin with the raw amino-acid sequence, 374 residues long: Putative 2,3-diketo-5-methylthiopentyl-1-phosphate enolase (374 aa).

Residues lysine 138, 164–167 (QDDE), histidine 255, glycine 327, and 349–350 (GG) contribute to the substrate site. A Mg(2+)-binding site is contributed by aspartate 166.

Belongs to the RuBisCO large chain family. Type IV subfamily. In terms of assembly, homodimer. Mg(2+) serves as cofactor.

The catalysed reaction is 5-methylsulfanyl-2,3-dioxopentyl phosphate = 2-hydroxy-5-methylsulfanyl-3-oxopent-1-enyl phosphate. It participates in amino-acid biosynthesis; L-methionine biosynthesis via salvage pathway; L-methionine from S-methyl-5-thio-alpha-D-ribose 1-phosphate: step 3/6. Catalyzes the enolization of 2,3-diketo-5-methylthiopentyl-1-phosphate (DK-MTP-1-P) into 2-hydroxy-3-keto-5-methylthiopentenyl-1-phosphate (HK-MTPenyl-1-P). The protein is Putative 2,3-diketo-5-methylthiopentyl-1-phosphate enolase (mtnW) of Shouchella clausii (strain KSM-K16) (Alkalihalobacillus clausii).